Reading from the N-terminus, the 42-residue chain is Profilin (42 aa).

It belongs to the profilin family. Occurs in many kinds of cells as a complex with monomeric actin in a 1:1 ratio.

The protein resides in the cytoplasm. Its subcellular location is the cytoskeleton. Its function is as follows. Binds to actin and affects the structure of the cytoskeleton. At high concentrations, profilin prevents the polymerization of actin, whereas it enhances it at low concentrations. The sequence is that of Profilin from Plantago lanceolata (English plantain).